A 119-amino-acid polypeptide reads, in one-letter code: Large ribosomal subunit protein bL20 (119 aa).

Belongs to the bacterial ribosomal protein bL20 family.

Functionally, binds directly to 23S ribosomal RNA and is necessary for the in vitro assembly process of the 50S ribosomal subunit. It is not involved in the protein synthesizing functions of that subunit. The polypeptide is Large ribosomal subunit protein bL20 (Latilactobacillus sakei subsp. sakei (strain 23K) (Lactobacillus sakei subsp. sakei)).